Consider the following 424-residue polypeptide: Serine--tRNA ligase (424 aa).

L-serine is bound at residue 230 to 232 (TSE). Residues 261–263 (RKE) and Val277 contribute to the ATP site. Residue Glu284 coordinates L-serine. Position 348-351 (348-351 (ELTS)) interacts with ATP. Residue Thr382 coordinates L-serine.

The protein belongs to the class-II aminoacyl-tRNA synthetase family. Type-1 seryl-tRNA synthetase subfamily. In terms of assembly, homodimer. The tRNA molecule binds across the dimer.

It is found in the cytoplasm. The catalysed reaction is tRNA(Ser) + L-serine + ATP = L-seryl-tRNA(Ser) + AMP + diphosphate + H(+). It carries out the reaction tRNA(Sec) + L-serine + ATP = L-seryl-tRNA(Sec) + AMP + diphosphate + H(+). Its pathway is aminoacyl-tRNA biosynthesis; selenocysteinyl-tRNA(Sec) biosynthesis; L-seryl-tRNA(Sec) from L-serine and tRNA(Sec): step 1/1. Catalyzes the attachment of serine to tRNA(Ser). Is also able to aminoacylate tRNA(Sec) with serine, to form the misacylated tRNA L-seryl-tRNA(Sec), which will be further converted into selenocysteinyl-tRNA(Sec). This is Serine--tRNA ligase from Nocardioides sp. (strain ATCC BAA-499 / JS614).